A 225-amino-acid chain; its full sequence is Uracil-DNA glycosylase (225 aa).

The active-site Proton acceptor is D65.

The protein belongs to the uracil-DNA glycosylase (UDG) superfamily. UNG family.

The protein localises to the cytoplasm. The catalysed reaction is Hydrolyzes single-stranded DNA or mismatched double-stranded DNA and polynucleotides, releasing free uracil.. In terms of biological role, excises uracil residues from the DNA which can arise as a result of misincorporation of dUMP residues by DNA polymerase or due to deamination of cytosine. This chain is Uracil-DNA glycosylase, found in Clostridium perfringens (strain SM101 / Type A).